Reading from the N-terminus, the 90-residue chain is Small ribosomal subunit protein uS15 (90 aa).

This sequence belongs to the universal ribosomal protein uS15 family. In terms of assembly, part of the 30S ribosomal subunit. Forms a bridge to the 50S subunit in the 70S ribosome, contacting the 23S rRNA.

Its function is as follows. One of the primary rRNA binding proteins, it binds directly to 16S rRNA where it helps nucleate assembly of the platform of the 30S subunit by binding and bridging several RNA helices of the 16S rRNA. Functionally, forms an intersubunit bridge (bridge B4) with the 23S rRNA of the 50S subunit in the ribosome. The polypeptide is Small ribosomal subunit protein uS15 (Helicobacter pylori (strain J99 / ATCC 700824) (Campylobacter pylori J99)).